Here is a 545-residue protein sequence, read N- to C-terminus: SLAIN motif-containing protein 1 (545 aa).

Residues 14–53 adopt a coiled-coil conformation; the sequence is TTNGLVANAELEVKKLQELVRKLEKQNEQLRNRASAVSNC. Composition is skewed to low complexity over residues 268 to 286 and 466 to 481; these read TTST…SLYS and IPSS…SGIP. Disordered regions lie at residues 268–342 and 461–526; these read TTST…IRDC and QGGS…LQPP. Positions 503 to 522 are enriched in polar residues; that stretch reads STANGSSIPRSKIAQPQRSF.

Belongs to the SLAIN motif-containing family.

It is found in the cytoplasm. The protein localises to the cytoskeleton. Its function is as follows. Microtubule plus-end tracking protein that might be involved in the regulation of cytoplasmic microtubule dynamics, microtubule organization and microtubule elongation. The polypeptide is SLAIN motif-containing protein 1 (slain1) (Xenopus tropicalis (Western clawed frog)).